A 446-amino-acid chain; its full sequence is Histidine--tRNA ligase (446 aa).

Belongs to the class-II aminoacyl-tRNA synthetase family. Homodimer.

It is found in the cytoplasm. The catalysed reaction is tRNA(His) + L-histidine + ATP = L-histidyl-tRNA(His) + AMP + diphosphate + H(+). The protein is Histidine--tRNA ligase of Burkholderia cenocepacia (strain ATCC BAA-245 / DSM 16553 / LMG 16656 / NCTC 13227 / J2315 / CF5610) (Burkholderia cepacia (strain J2315)).